The sequence spans 200 residues: Holliday junction branch migration complex subunit RuvA (200 aa).

Residues 1–65 form a domain I region; sequence MYEYIKGTLT…ETEHVLYGFS (65 aa). The domain II stretch occupies residues 66-144; sequence SRAERECFRL…TLMPLYLEEP (79 aa). Residues 145–149 are flexible linker; it reads VVPSS. Positions 150–200 are domain III; that stretch reads TANSSFKEGIGALMNLGFSRLAADRMMTEAVKELSEEASVAELLPIALRKS.

The protein belongs to the RuvA family. As to quaternary structure, homotetramer. Forms an RuvA(8)-RuvB(12)-Holliday junction (HJ) complex. HJ DNA is sandwiched between 2 RuvA tetramers; dsDNA enters through RuvA and exits via RuvB. An RuvB hexamer assembles on each DNA strand where it exits the tetramer. Each RuvB hexamer is contacted by two RuvA subunits (via domain III) on 2 adjacent RuvB subunits; this complex drives branch migration. In the full resolvosome a probable DNA-RuvA(4)-RuvB(12)-RuvC(2) complex forms which resolves the HJ.

The protein localises to the cytoplasm. Its function is as follows. The RuvA-RuvB-RuvC complex processes Holliday junction (HJ) DNA during genetic recombination and DNA repair, while the RuvA-RuvB complex plays an important role in the rescue of blocked DNA replication forks via replication fork reversal (RFR). RuvA specifically binds to HJ cruciform DNA, conferring on it an open structure. The RuvB hexamer acts as an ATP-dependent pump, pulling dsDNA into and through the RuvAB complex. HJ branch migration allows RuvC to scan DNA until it finds its consensus sequence, where it cleaves and resolves the cruciform DNA. This is Holliday junction branch migration complex subunit RuvA from Chlamydia trachomatis serovar L2 (strain ATCC VR-902B / DSM 19102 / 434/Bu).